We begin with the raw amino-acid sequence, 213 residues long: Glutamine amidotransferase-like class 1 domain-containing protein 1 (213 aa).

The N-terminal stretch at 1–20 (MTSKPTCLIVASAASAGVSA) is a signal peptide.

Belongs to the peptidase C56 family. In terms of assembly, homotetramer. Component of the FERRY complex.

It is found in the secreted. It localises to the early endosome. Functionally, component of the FERRY complex (Five-subunit Endosomal Rab5 and RNA/ribosome intermediary). The FERRY complex directly interacts with mRNAs and RAB5A, and functions as a RAB5A effector involved in the localization and the distribution of specific mRNAs most likely by mediating their endosomal transport. The complex recruits mRNAs and ribosomes to early endosomes through direct mRNA-interaction. The chain is Glutamine amidotransferase-like class 1 domain-containing protein 1 from Danio rerio (Zebrafish).